We begin with the raw amino-acid sequence, 287 residues long: PAK4-inhibitor INKA1 (287 aa).

Disordered regions lie at residues 22–59 and 138–157; these read GRDT…LEED and SRAP…KSTP. Positions 35 to 50 are enriched in polar residues; it reads QPTSQTGPDVQPSHQL. The segment covering 138 to 147 has biased composition (low complexity); the sequence is SRAPVASVPP. 2 inka box regions span residues 168-205 and 261-287; these read EAED…ELPE and PADV…VSYL.

The protein belongs to the INKA family. Interacts with PAK4.

The protein resides in the nucleus. Its subcellular location is the cytoplasm. In terms of biological role, inhibitor of the serine/threonine-protein kinase PAK4. Acts by binding PAK4 in a substrate-like manner, inhibiting the protein kinase activity. The polypeptide is PAK4-inhibitor INKA1 (Homo sapiens (Human)).